A 175-amino-acid polypeptide reads, in one-letter code: Di-N-acetylchitobiase (175 aa).

Residues 1–38 (MARLQLAGSRRLVPLPRRAPRLAPLLLPLLLALPDGAR) form the signal peptide. Residues 39–175 (ADCPCKVPAL…SFHHEIKGSQ (137 aa)) enclose the GH18 domain. N115 carries an N-linked (GlcNAc...) asparagine glycan. The Proton donor role is filled by E143.

It belongs to the glycosyl hydrolase 18 family.

It localises to the lysosome. Involved in the degradation of asparagine-linked glycoproteins. Hydrolyze of N-acetyl-beta-D-glucosamine (1-4)N-acetylglucosamine chitobiose core from the reducing end of the bond, it requires prior cleavage by glycosylasparaginase. The protein is Di-N-acetylchitobiase (CTBS) of Bos taurus (Bovine).